A 347-amino-acid chain; its full sequence is MEVRVESLRKEFGRFPALVDVTLDILSGELIALLGPSGSGKTTLLRLIAGLESPTEGMIFFGDEDASKRTVQERNIGFVFQHYALFRHMTVLDNVTFGLKVRPANRRPPAAEIRRRALDLIDLVQLSGLEKRYPAQLSGGQRQRVALARAMAVEPSVLLLDEPFGALDAQVRKELRRWLREIHDRTGYTTLFVTHDQEEALELADRVVVMSKGAIEQVGTPDEIYDHPVSPFVYGFIGQSNCLNVTLANGEIWFEGRPIGLRAANEPDGQATLFFRPHDVELIEGGSGCLAGRVTASRRVAGTRHLELDLGKTQSSIEVELPPELASSADRTRIALRPTKWKLFCGE.

The ABC transporter domain occupies 3-237 (VRVESLRKEF…PVSPFVYGFI (235 aa)). 35–42 (GPSGSGKT) is a binding site for ATP.

The protein belongs to the ABC transporter superfamily. Sulfate/tungstate importer (TC 3.A.1.6) family. As to quaternary structure, the complex is composed of two ATP-binding proteins (CysA), two transmembrane proteins (CysT and CysW) and a solute-binding protein (CysP).

The protein resides in the cell inner membrane. It carries out the reaction sulfate(out) + ATP + H2O = sulfate(in) + ADP + phosphate + H(+). The catalysed reaction is thiosulfate(out) + ATP + H2O = thiosulfate(in) + ADP + phosphate + H(+). Its function is as follows. Part of the ABC transporter complex CysAWTP involved in sulfate/thiosulfate import. Responsible for energy coupling to the transport system. This chain is Sulfate/thiosulfate import ATP-binding protein CysA 1, found in Rhizobium meliloti (strain 1021) (Ensifer meliloti).